The chain runs to 431 residues: Serine--tRNA ligase (431 aa).

L-serine is bound at residue 235–237 (TSE). Residue 266-268 (RSE) participates in ATP binding. E289 serves as a coordination point for L-serine. 353–356 (EISS) serves as a coordination point for ATP. S388 is a binding site for L-serine.

This sequence belongs to the class-II aminoacyl-tRNA synthetase family. Type-1 seryl-tRNA synthetase subfamily. In terms of assembly, homodimer. The tRNA molecule binds across the dimer.

Its subcellular location is the cytoplasm. It catalyses the reaction tRNA(Ser) + L-serine + ATP = L-seryl-tRNA(Ser) + AMP + diphosphate + H(+). The catalysed reaction is tRNA(Sec) + L-serine + ATP = L-seryl-tRNA(Sec) + AMP + diphosphate + H(+). The protein operates within aminoacyl-tRNA biosynthesis; selenocysteinyl-tRNA(Sec) biosynthesis; L-seryl-tRNA(Sec) from L-serine and tRNA(Sec): step 1/1. Catalyzes the attachment of serine to tRNA(Ser). Is also able to aminoacylate tRNA(Sec) with serine, to form the misacylated tRNA L-seryl-tRNA(Sec), which will be further converted into selenocysteinyl-tRNA(Sec). This chain is Serine--tRNA ligase, found in Paraburkholderia phytofirmans (strain DSM 17436 / LMG 22146 / PsJN) (Burkholderia phytofirmans).